Reading from the N-terminus, the 151-residue chain is ALK and LTK ligand 2 (151 aa).

The first 25 residues, 1–25, serve as a signal peptide directing secretion; sequence MRVSGRPMLLALLLLLSTVGDRGRA. 2 cysteine pairs are disulfide-bonded: Cys-112/Cys-148 and Cys-126/Cys-135.

Belongs to the ALKAL family. As to quaternary structure, homodimer.

It localises to the secreted. The protein resides in the cell membrane. Functionally, cytokine that acts as a physiological ligand for receptor tyrosine kinases LTK and ALK, leading to their activation. Cytokine-binding is sufficient to activate LTK. In contrast, ALKAL2-driven activation of ALK is coupled with heparin-binding to ALK. Stimulation of ALK signaling is involved in neural development and regulation of energy expenditure. The chain is ALK and LTK ligand 2 from Mus musculus (Mouse).